Here is a 351-residue protein sequence, read N- to C-terminus: Histidinol-phosphate aminotransferase (351 aa).

Lys213 carries the N6-(pyridoxal phosphate)lysine modification.

The protein belongs to the class-II pyridoxal-phosphate-dependent aminotransferase family. Histidinol-phosphate aminotransferase subfamily. In terms of assembly, homodimer. Pyridoxal 5'-phosphate is required as a cofactor.

It carries out the reaction L-histidinol phosphate + 2-oxoglutarate = 3-(imidazol-4-yl)-2-oxopropyl phosphate + L-glutamate. The protein operates within amino-acid biosynthesis; L-histidine biosynthesis; L-histidine from 5-phospho-alpha-D-ribose 1-diphosphate: step 7/9. The protein is Histidinol-phosphate aminotransferase of Thermoanaerobacter pseudethanolicus (strain ATCC 33223 / 39E) (Clostridium thermohydrosulfuricum).